Consider the following 226-residue polypeptide: ATP synthase F(0) complex subunit a (226 aa).

Met1 bears the N-formylmethionine mark. Helical transmembrane passes span 9–29 (FITPVILGLPLVTLIVLFPSL), 68–88 (WTLMLMSLILFIGSTNLLGLL), 97–117 (QLSMNLGMAIPLWAGAVITGF), 138–158 (IPMLVIIETISLFIQPMALAV), 164–184 (ITAGHLLIHLIGGATLALMSI), and 189–209 (ALITFTILILLTILEFAVAMI).

This sequence belongs to the ATPase A chain family. In terms of assembly, component of the ATP synthase complex composed at least of ATP5F1A/subunit alpha, ATP5F1B/subunit beta, ATP5MC1/subunit c (homooctomer), MT-ATP6/subunit a, MT-ATP8/subunit 8, ATP5ME/subunit e, ATP5MF/subunit f, ATP5MG/subunit g, ATP5MK/subunit k, ATP5MJ/subunit j, ATP5F1C/subunit gamma, ATP5F1D/subunit delta, ATP5F1E/subunit epsilon, ATP5PF/subunit F6, ATP5PB/subunit b, ATP5PD/subunit d, ATP5PO/subunit OSCP. ATP synthase complex consists of a soluble F(1) head domain (subunits alpha(3) and beta(3)) - the catalytic core - and a membrane F(0) domain - the membrane proton channel (subunits c, a, 8, e, f, g, k and j). These two domains are linked by a central stalk (subunits gamma, delta, and epsilon) rotating inside the F1 region and a stationary peripheral stalk (subunits F6, b, d, and OSCP). Interacts with DNAJC30; interaction is direct.

The protein localises to the mitochondrion inner membrane. The enzyme catalyses H(+)(in) = H(+)(out). In terms of biological role, subunit a, of the mitochondrial membrane ATP synthase complex (F(1)F(0) ATP synthase or Complex V) that produces ATP from ADP in the presence of a proton gradient across the membrane which is generated by electron transport complexes of the respiratory chain. ATP synthase complex consist of a soluble F(1) head domain - the catalytic core - and a membrane F(1) domain - the membrane proton channel. These two domains are linked by a central stalk rotating inside the F(1) region and a stationary peripheral stalk. During catalysis, ATP synthesis in the catalytic domain of F(1) is coupled via a rotary mechanism of the central stalk subunits to proton translocation. With the subunit c (ATP5MC1), forms the proton-conducting channel in the F(0) domain, that contains two crucial half-channels (inlet and outlet) that facilitate proton movement from the mitochondrial intermembrane space (IMS) into the matrix. Protons are taken up via the inlet half-channel and released through the outlet half-channel, following a Grotthuss mechanism. In Bos taurus (Bovine), this protein is ATP synthase F(0) complex subunit a.